The sequence spans 444 residues: Glutamyl-tRNA reductase (444 aa).

Substrate is bound by residues 49 to 52 (TCNR), S109, 114 to 116 (ETQ), and Q120. Catalysis depends on C50, which acts as the Nucleophile. Residue 189-194 (GAGKMG) coordinates NADP(+).

Belongs to the glutamyl-tRNA reductase family. As to quaternary structure, homodimer.

It carries out the reaction (S)-4-amino-5-oxopentanoate + tRNA(Glu) + NADP(+) = L-glutamyl-tRNA(Glu) + NADPH + H(+). The protein operates within porphyrin-containing compound metabolism; protoporphyrin-IX biosynthesis; 5-aminolevulinate from L-glutamyl-tRNA(Glu): step 1/2. In terms of biological role, catalyzes the NADPH-dependent reduction of glutamyl-tRNA(Glu) to glutamate 1-semialdehyde (GSA). This is Glutamyl-tRNA reductase from Bacillus cereus (strain AH187).